A 565-amino-acid chain; its full sequence is Coiled-coil domain-containing protein 17 (565 aa).

Positions 58–87 (IMAQEKSRDQEASTSALKRLTEETAGSPGE) are disordered. 2 coiled-coil regions span residues 97-160 (ARRM…TLGA) and 219-271 (LQLQ…KVLS).

This chain is Coiled-coil domain-containing protein 17 (Ccdc17), found in Mus musculus (Mouse).